A 208-amino-acid chain; its full sequence is Ribosome maturation factor RimM (208 aa).

The PRC barrel domain maps to 98–205 (ADEFYVPDLI…IIEITPPDGL (108 aa)). The segment at 154-174 (LPSKSKRSRDTKNQKKNQSPP) is disordered.

The protein belongs to the RimM family. As to quaternary structure, binds ribosomal protein uS19.

It localises to the cytoplasm. In terms of biological role, an accessory protein needed during the final step in the assembly of 30S ribosomal subunit, possibly for assembly of the head region. Essential for efficient processing of 16S rRNA. May be needed both before and after RbfA during the maturation of 16S rRNA. It has affinity for free ribosomal 30S subunits but not for 70S ribosomes. This chain is Ribosome maturation factor RimM, found in Trichodesmium erythraeum (strain IMS101).